Reading from the N-terminus, the 295-residue chain is Formamidopyrimidine-DNA glycosylase (295 aa).

The active-site Schiff-base intermediate with DNA is the proline 2. The active-site Proton donor is the glutamate 3. Lysine 61 acts as the Proton donor; for beta-elimination activity in catalysis. Residues histidine 95, arginine 117, and arginine 159 each contribute to the DNA site. An FPG-type zinc finger spans residues histidine 245–proline 279. Arginine 269 serves as the catalytic Proton donor; for delta-elimination activity.

This sequence belongs to the FPG family. Monomer. The cofactor is Zn(2+).

It carries out the reaction Hydrolysis of DNA containing ring-opened 7-methylguanine residues, releasing 2,6-diamino-4-hydroxy-5-(N-methyl)formamidopyrimidine.. It catalyses the reaction 2'-deoxyribonucleotide-(2'-deoxyribose 5'-phosphate)-2'-deoxyribonucleotide-DNA = a 3'-end 2'-deoxyribonucleotide-(2,3-dehydro-2,3-deoxyribose 5'-phosphate)-DNA + a 5'-end 5'-phospho-2'-deoxyribonucleoside-DNA + H(+). Its function is as follows. Involved in base excision repair of DNA damaged by oxidation or by mutagenic agents. Acts as a DNA glycosylase that recognizes and removes damaged bases. Has a preference for oxidized purines, such as 7,8-dihydro-8-oxoguanine (8-oxoG). Has AP (apurinic/apyrimidinic) lyase activity and introduces nicks in the DNA strand. Cleaves the DNA backbone by beta-delta elimination to generate a single-strand break at the site of the removed base with both 3'- and 5'-phosphates. In Nocardioides sp. (strain ATCC BAA-499 / JS614), this protein is Formamidopyrimidine-DNA glycosylase.